The following is a 129-amino-acid chain: UPF0344 protein USA300HOU_0928 (129 aa).

The next 4 helical transmembrane spans lie at 1–21 (MLHL…ATYL), 36–56 (LHMI…WILI), 67–87 (MLLT…EVSI), and 99–119 (MFWI…ILPL).

This sequence belongs to the UPF0344 family.

Its subcellular location is the cell membrane. The protein is UPF0344 protein USA300HOU_0928 of Staphylococcus aureus (strain USA300 / TCH1516).